A 510-amino-acid chain; its full sequence is Bifunctional purine biosynthesis protein PurH (510 aa).

Residues 1-144 enclose the MGS-like domain; the sequence is MSKRALISVT…KNYKDVIVVV (144 aa).

The protein belongs to the PurH family.

It catalyses the reaction (6R)-10-formyltetrahydrofolate + 5-amino-1-(5-phospho-beta-D-ribosyl)imidazole-4-carboxamide = 5-formamido-1-(5-phospho-D-ribosyl)imidazole-4-carboxamide + (6S)-5,6,7,8-tetrahydrofolate. The enzyme catalyses IMP + H2O = 5-formamido-1-(5-phospho-D-ribosyl)imidazole-4-carboxamide. Its pathway is purine metabolism; IMP biosynthesis via de novo pathway; 5-formamido-1-(5-phospho-D-ribosyl)imidazole-4-carboxamide from 5-amino-1-(5-phospho-D-ribosyl)imidazole-4-carboxamide (10-formyl THF route): step 1/1. It participates in purine metabolism; IMP biosynthesis via de novo pathway; IMP from 5-formamido-1-(5-phospho-D-ribosyl)imidazole-4-carboxamide: step 1/1. The sequence is that of Bifunctional purine biosynthesis protein PurH from Clostridioides difficile (strain 630) (Peptoclostridium difficile).